A 504-amino-acid chain; its full sequence is Sodium-coupled neutral amino acid symporter 2 (504 aa).

The interval 1-23 (MKKTEMGRFNISPDEDSSSYSSN) is disordered. Topologically, residues 1 to 76 (MKKTEMGRFN…HPGTTSFGMS (76 aa)) are cytoplasmic. The regulates protein turnover upon amino acid deprivation stretch occupies residues 1–96 (MKKTEMGRFN…SGILGLSYAM (96 aa)). S12, S21, S22, and S55 each carry phosphoserine. The helical transmembrane segment at 77 to 96 (VFNLSNAIVGSGILGLSYAM) threads the bilayer. N82 lines the Na(+) pocket. Topologically, residues 97-102 (ANTGIA) are extracellular. Residues 103–123 (LFIILLTFVSIFSLYSVHLLL) traverse the membrane as a helical segment. Residues 124–158 (KTANEGGSLLYEQLGHKAYGLAGKLAASGSITMQN) lie on the Cytoplasmic side of the membrane. The helical transmembrane segment at 159–177 (IGAMSSYLFIVKYELPLVI) threads the bilayer. Topologically, residues 178-188 (KALMNIEDTNG) are extracellular. Residues 189-209 (LWYLNGDYLVLLVSLVLILPL) form a helical membrane-spanning segment. Topologically, residues 210 to 217 (SLLRNLGY) are cytoplasmic. Residues 218 to 238 (LGYTSGLSLLCMIFFLIVVIC) traverse the membrane as a helical segment. At 239-289 (KKFQIPCPVEAALVANETVNGTFTQAALALAFNSTADDACRPRYFIFNSQT) the chain is on the extracellular side. C245 and C278 are joined by a disulfide. N-linked (GlcNAc...) asparagine glycans are attached at residues N254 and N258. A helical membrane pass occupies residues 290 to 310 (VYAVPILTFSFVCHPAVLPIY). Topologically, residues 311-326 (EELKSRSRRRMMNVSK) are cytoplasmic. The helical transmembrane segment at 327 to 347 (ISFFAMFLMYLLAALFGYLTF) threads the bilayer. Topologically, residues 348-368 (YGHVESELLHTYSEIVGTDIL) are extracellular. Residues 369 to 389 (LLVVRLAVLVAVTLTVPVVIF) form a helical membrane-spanning segment. T383 serves as a coordination point for Na(+). Residues 390-410 (PIRSSVTHLLCPTKEFSWLRH) are Cytoplasmic-facing. Residues 411-431 (SIITVTILSFTNLLVIFVPTI) traverse the membrane as a helical segment. Topologically, residues 432–433 (RD) are extracellular. The chain crosses the membrane as a helical span at residues 434–454 (IFGFIGASAAAMLIFILPSAF). Residues 455–469 (YIKLVKKEPMRSVQK) are Cytoplasmic-facing. Residues 470–492 (IGALCFLLSGIVVMIGSMGLIVL) traverse the membrane as a helical segment. The Extracellular portion of the chain corresponds to 493–504 (DWVHDASAAGGH).

The protein belongs to the amino acid/polyamine transporter 2 family. Post-translationally, polyubiquitination by NEDD4L regulates the degradation and the activity of SLC38A2. As to expression, expressed in cerebral and cerebellar astrocytes and neurons.

The protein localises to the cell membrane. It carries out the reaction L-alanine(in) + Na(+)(in) = L-alanine(out) + Na(+)(out). The catalysed reaction is glycine(in) + Na(+)(in) = glycine(out) + Na(+)(out). It catalyses the reaction L-serine(in) + Na(+)(in) = L-serine(out) + Na(+)(out). The enzyme catalyses L-proline(in) + Na(+)(in) = L-proline(out) + Na(+)(out). It carries out the reaction L-methionine(in) + Na(+)(in) = L-methionine(out) + Na(+)(out). The catalysed reaction is L-histidine(in) + Na(+)(in) = L-histidine(out) + Na(+)(out). It catalyses the reaction L-asparagine(in) + Na(+)(in) = L-asparagine(out) + Na(+)(out). The enzyme catalyses L-glutamine(in) + Na(+)(in) = L-glutamine(out) + Na(+)(out). It carries out the reaction L-threonine(in) + Na(+)(in) = L-threonine(out) + Na(+)(out). The catalysed reaction is L-leucine(in) + Na(+)(in) = L-leucine(out) + Na(+)(out). It catalyses the reaction L-phenylalanine(in) + Na(+)(in) = L-phenylalanine(out) + Na(+)(out). Inhibited by N-methyl-D-glucamine. Inhibited by choline. Allosteric regulation of sodium ions binding by pH. Symporter that cotransports neutral amino acids and sodium ions from the extracellular to the intracellular side of the cell membrane. The transport is pH-sensitive, Li(+)-intolerant, electrogenic, driven by the Na(+) electrochemical gradient and cotransports of neutral amino acids and sodium ions with a stoichiometry of 1:1. May function in the transport of amino acids at the blood-brain barrier. May function in the transport of amino acids in the supply of maternal nutrients to the fetus through the placenta. Maintains a key metabolic glutamine/glutamate balance underpinning retrograde signaling by dendritic release of the neurotransmitter glutamate. Transports L-proline in differentiating osteoblasts for the efficient synthesis of proline-enriched proteins and provides proline essential for osteoblast differentiation and bone formation during bone development. The protein is Sodium-coupled neutral amino acid symporter 2 of Mus musculus (Mouse).